The sequence spans 354 residues: Multiple sugar-binding periplasmic receptor ChvE (354 aa).

The N-terminal stretch at 1–25 is a signal peptide; sequence MKSIISLTAAAAIGVAMFVAPAFAA.

It belongs to the bacterial solute-binding protein 2 family.

The protein resides in the periplasm. In terms of biological role, required for effective transcriptional induction of the vir genes by monosaccharides in response to plant signals and for normal growth and chemotaxis towards certain sugars. Functions as a periplasmic multiple sugar-binding receptor protein. It does not interact with a transport system. The sequence is that of Multiple sugar-binding periplasmic receptor ChvE (chvE) from Rhizobium radiobacter (Agrobacterium tumefaciens).